The sequence spans 1103 residues: PH, RCC1 and FYVE domains-containing protein 1 (1103 aa).

One can recognise a PH domain in the interval 22 to 123; sequence KKGTQLLKYG…IWIGGLKTLI (102 aa). Residues 144-233 are disordered; the sequence is DASRELTSSS…SSSHGSAADD (90 aa). Composition is skewed to low complexity over residues 151–169 and 217–231; these read SSSP…SSPG and SVSS…GSAA. 7 RCC1 repeats span residues 237-298, 299-351, 353-406, 407-458, 471-522, 524-574, and 575-626; these read LGDV…FVTR, QGEI…AVTL, GELY…LITS, YGRL…AVVE, SGKL…GLTT, GQVF…ALTS, and RNEV…AICL. The segment at 632 to 694 adopts an FYVE-type zinc-finger fold; sequence GAEQSQCSTC…VCDSCYVKLS (63 aa). Positions 638, 641, 654, 657, 662, 665, 686, and 689 each coordinate Zn(2+). Residues 783-818 are disordered; that stretch reads ATPKLAQAPSGISSRSVSPFSRRSSPPRSATPMPST. Over residues 791 to 818 the composition is skewed to low complexity; sequence PSGISSRSVSPFSRRSSPPRSATPMPST. Residues 828 to 904 adopt a coiled-coil conformation; sequence ADNMKKTNEI…IAQLKDVAEK (77 aa). Residues 962 to 979 are compositionally biased toward polar residues; the sequence is NLQSPKQTPRASERNSNA. The interval 962 to 988 is disordered; that stretch reads NLQSPKQTPRASERNSNAYPADPRLSS. The 56-residue stretch at 1023-1078 folds into the BRX domain; it reads AEWIEQYEPGVYITLVALHDGTRDLRRVRFSRRRFGEHQAETWWSENREKVYEKYN. The disordered stretch occupies residues 1079–1103; the sequence is VRVSEKSTASQTHRDRDEEEEDIPH.

As to expression, mostly expressed in flowers, and, to a lower extent, in stems, leaves, siliques, seeds.

Functionally, binds to phosphatidic acid and to phosphoinositides such as PtdIns3P, PtdIns(3,4)P(2), PtdIns(3,4,5)P(3) and PtdIns(4,5)P(2). Catalyzes guanine nucleotide exchange on specific Rab proteins. This Arabidopsis thaliana (Mouse-ear cress) protein is PH, RCC1 and FYVE domains-containing protein 1.